Here is a 421-residue protein sequence, read N- to C-terminus: Histidine--tRNA ligase (421 aa).

This sequence belongs to the class-II aminoacyl-tRNA synthetase family. Homodimer.

Its subcellular location is the cytoplasm. The catalysed reaction is tRNA(His) + L-histidine + ATP = L-histidyl-tRNA(His) + AMP + diphosphate + H(+). The chain is Histidine--tRNA ligase from Francisella tularensis subsp. tularensis (strain SCHU S4 / Schu 4).